The sequence spans 492 residues: MDDQYKNDHQNFVSGNDGSTFFETCFILTLMPISVLFQRVVFATFFNNDKFPLPLALRFILEFFFIIVPFISAITFTELTPFLIVGMLITCLVVPMFAQKNVTIYFKNPKETLLNLNSMRKGFLEEYRAFVMAATCICILAVDFQVFPRRLGKTETYGISLMDIGVGSVVLSGALVSRQSRSSLIEKQQKKKREEEEDDNDKINKTSSSSSSSSSALKQQQQQVLSRSSLMWHQVKAQAPLMILGFVRMILTKSINYQEHVSEYGLHWNFFFTLGFVSISLAFLKFNANISAILGVVLICVYQFLLNSFGLTDYILNHPRDNLISMNKEGICSFVGYLAIYLIGTKIGTELFKVRSSLTEWRKFATKLLISSIVFYILWILCEIYIDKTSRRMANLGYVLAILSINLFNFSINILITLITGNHNASVIAKSINRNQLFIFLLGNILTGLINFSMKTIYAPVEQSMIIITSYTFALCLLAFILDYKNINIKFW.

5 helical membrane-spanning segments follow: residues 26–46, 59–79, 82–102, 127–147, and 156–176; these read FILT…ATFF, FILE…FTEL, FLIV…QKNV, YRAF…FQVF, and TYGI…GALV. The tract at residues 185–216 is disordered; that stretch reads IEKQQKKKREEEEDDNDKINKTSSSSSSSSSA. N-linked (GlcNAc...) asparagine glycosylation is present at Asn-204. Over residues 205-216 the composition is skewed to low complexity; the sequence is KTSSSSSSSSSA. Residues 264–284 traverse the membrane as a helical segment; that stretch reads YGLHWNFFFTLGFVSISLAFL. N-linked (GlcNAc...) asparagine glycosylation is present at Asn-289. 4 helical membrane-spanning segments follow: residues 290 to 310, 331 to 351, 364 to 384, and 399 to 419; these read ISAI…NSFG, ICSF…GTEL, FATK…LCEI, and VLAI…ITLI. A glycan (N-linked (GlcNAc...) asparagine) is linked at Asn-424. A run of 2 helical transmembrane segments spans residues 437 to 457 and 464 to 484; these read LFIF…MKTI and SMII…ILDY.

Belongs to the PIGW family.

The protein resides in the endoplasmic reticulum membrane. It participates in glycolipid biosynthesis; glycosylphosphatidylinositol-anchor biosynthesis. In terms of biological role, probable acetyltransferase, which acetylates the inositol ring of phosphatidylinositol during biosynthesis of GPI-anchor. This chain is Phosphatidylinositol-glycan biosynthesis class W protein, found in Dictyostelium discoideum (Social amoeba).